A 308-amino-acid polypeptide reads, in one-letter code: Aspartate carbamoyltransferase catalytic subunit (308 aa).

Carbamoyl phosphate is bound by residues Arg49 and Thr50. Lys77 contributes to the L-aspartate binding site. 3 residues coordinate carbamoyl phosphate: Arg99, His127, and Gln130. The L-aspartate site is built by Arg160 and Arg211. Residues Ala252 and Pro253 each contribute to the carbamoyl phosphate site.

This sequence belongs to the aspartate/ornithine carbamoyltransferase superfamily. ATCase family. In terms of assembly, heterododecamer (2C3:3R2) of six catalytic PyrB chains organized as two trimers (C3), and six regulatory PyrI chains organized as three dimers (R2).

The enzyme catalyses carbamoyl phosphate + L-aspartate = N-carbamoyl-L-aspartate + phosphate + H(+). Its pathway is pyrimidine metabolism; UMP biosynthesis via de novo pathway; (S)-dihydroorotate from bicarbonate: step 2/3. Its function is as follows. Catalyzes the condensation of carbamoyl phosphate and aspartate to form carbamoyl aspartate and inorganic phosphate, the committed step in the de novo pyrimidine nucleotide biosynthesis pathway. The sequence is that of Aspartate carbamoyltransferase catalytic subunit from Geobacillus kaustophilus (strain HTA426).